The following is a 66-amino-acid chain: Large ribosomal subunit protein bL35 (66 aa).

The span at 1 to 16 shows a compositional bias: basic residues; that stretch reads MPKQKTHRASAKRFKR. Residues 1 to 21 form a disordered region; the sequence is MPKQKTHRASAKRFKRTGSGG.

It belongs to the bacterial ribosomal protein bL35 family.

This is Large ribosomal subunit protein bL35 from Streptococcus sanguinis (strain SK36).